The primary structure comprises 340 residues: DNA primase large subunit PriL (340 aa).

Residues C229, C301, C310, and C318 each coordinate [4Fe-4S] cluster.

The protein belongs to the eukaryotic-type primase large subunit family. In terms of assembly, heterodimer of a small subunit (PriS) and a large subunit (PriL). It depends on [4Fe-4S] cluster as a cofactor.

In terms of biological role, regulatory subunit of DNA primase, an RNA polymerase that catalyzes the synthesis of short RNA molecules used as primers for DNA polymerase during DNA replication. Stabilizes and modulates the activity of the small subunit, increasing the rate of DNA synthesis, and conferring RNA synthesis capability. The DNA polymerase activity may enable DNA primase to also catalyze primer extension after primer synthesis. May also play a role in DNA repair. The protein is DNA primase large subunit PriL of Thermoplasma acidophilum (strain ATCC 25905 / DSM 1728 / JCM 9062 / NBRC 15155 / AMRC-C165).